A 931-amino-acid polypeptide reads, in one-letter code: Dymeclin (931 aa).

Disordered stretches follow at residues 1 to 53, 599 to 618, and 839 to 931; these read MGVA…SSTT, SPSK…NTNN, and DANN…EKTN. Gly2 carries N-myristoyl glycine lipidation. Low complexity-rich tracts occupy residues 27 to 49 and 601 to 618; these read NNNK…NNNN and SKIN…NTNN. Polar residues predominate over residues 839 to 858; that stretch reads DANNFTPKKQLSSDQLHSPP. Low complexity-rich tracts occupy residues 859 to 876 and 889 to 901; these read TNTT…SSNT and QLQQ…NQEQ. The segment covering 919–931 has biased composition (polar residues); the sequence is TTGVELSSTEKTN.

It belongs to the dymeclin family.

The chain is Dymeclin (dym) from Dictyostelium discoideum (Social amoeba).